Consider the following 84-residue polypeptide: Large ribosomal subunit protein bL27 (84 aa).

Residues 1–20 (MAHKKGGGSTKNGRDSNPKY) form a disordered region.

Belongs to the bacterial ribosomal protein bL27 family.

The polypeptide is Large ribosomal subunit protein bL27 (Chlorobaculum tepidum (strain ATCC 49652 / DSM 12025 / NBRC 103806 / TLS) (Chlorobium tepidum)).